The primary structure comprises 487 residues: N-succinylglutamate 5-semialdehyde dehydrogenase (487 aa).

221 to 226 contributes to the NAD(+) binding site; that stretch reads GSSDTG. Catalysis depends on residues Glu244 and Cys278.

The protein belongs to the aldehyde dehydrogenase family. AstD subfamily.

The catalysed reaction is N-succinyl-L-glutamate 5-semialdehyde + NAD(+) + H2O = N-succinyl-L-glutamate + NADH + 2 H(+). It participates in amino-acid degradation; L-arginine degradation via AST pathway; L-glutamate and succinate from L-arginine: step 4/5. Catalyzes the NAD-dependent reduction of succinylglutamate semialdehyde into succinylglutamate. This chain is N-succinylglutamate 5-semialdehyde dehydrogenase, found in Burkholderia vietnamiensis (strain G4 / LMG 22486) (Burkholderia cepacia (strain R1808)).